An 89-amino-acid polypeptide reads, in one-letter code: Small ribosomal subunit protein uS19 (89 aa).

This sequence belongs to the universal ribosomal protein uS19 family.

Its function is as follows. Protein S19 forms a complex with S13 that binds strongly to the 16S ribosomal RNA. This chain is Small ribosomal subunit protein uS19, found in Xylella fastidiosa (strain M23).